The chain runs to 832 residues: Mechanosensitive cation channel TMEM63B (832 aa).

At 1 to 40 the chain is on the extracellular side; that stretch reads MLPFLLATLGTTALNNSNPKDYCYSARIRSTVLQGLPFGG. A helical membrane pass occupies residues 41-65; it reads VPTVLALDFMCFLALLFLFSILRKV. C51 carries the S-palmitoyl cysteine lipid modification. Over 66 to 145 the chain is Cytoplasmic; sequence AWDYGRLALV…KDDEIRDKCG (80 aa). The short motif at 86–88 is the Mediates endoplasmic reticulum retention element; sequence RDR. 4 positions are modified to phosphoserine: S111, S113, S114, and S115. Residue C126 is the site of S-palmitoyl cysteine attachment. A helical transmembrane segment spans residues 146–178; the sequence is GDAVHYLSFQRHIIGLLVVVGVLSVGIVLPVNF. At 179–202 the chain is on the extracellular side; the sequence is SGDLLENNAYSFGRTTIANLKSGN. Residues 203 to 227 form a helical membrane-spanning segment; the sequence is NLLWLHTSFAFLYLLLTVYSMRRHT. Topologically, residues 228–427 are cytoplasmic; the sequence is SKMRYKEDDL…IYWEHLSIRG (200 aa). The intracellular linker IL2; confers mechanosensitivity stretch occupies residues 231–426; sequence RYKEDDLVKR…NIYWEHLSIR (196 aa). 2 S-palmitoyl cysteine lipidation sites follow: C382 and C398. A helical membrane pass occupies residues 428 to 457; the sequence is FIWWLRCLVINVVLFILLFFLTTPAIIITT. Residues 458 to 472 are Extracellular-facing; the sequence is MDKFNVTKPVEYLNN. N462 is a glycosylation site (N-linked (GlcNAc...) asparagine). Residues 473–502 traverse the membrane as a helical segment; sequence PIITQFFPTLLLWCFSALLPTIVYYSAFFE. Topologically, residues 503 to 506 are cytoplasmic; the sequence is AHWT. Residues 507 to 543 form a helical membrane-spanning segment; that stretch reads RSGENRTTMHKCYTFLIFMVLLLPSLGLSSLDLFFRW. At 544–566 the chain is on the extracellular side; sequence LFDKKFLAEAAIRFECVFLPDNG. Residues 567-599 form a helical membrane-spanning segment; that stretch reads AFFVNYVIASAFIGNAMDLLRIPGLLMYMIRLC. Positions 567 to 599 are gating helix; it reads AFFVNYVIASAFIGNAMDLLRIPGLLMYMIRLC. Over 600 to 619 the chain is Cytoplasmic; that stretch reads LARSAAERRNVKRHQAYEFQ. The chain crosses the membrane as a helical span at residues 620-638; sequence FGAAYAWMMCVFTVVMTYS. Residues 639-641 lie on the Extracellular side of the membrane; that stretch reads ITC. Residues 642–666 traverse the membrane as a helical segment; it reads PIIVPFGLMYMLLKHLVDRYNLYYA. The Cytoplasmic portion of the chain corresponds to 667–673; that stretch reads YLPAKLD. The chain crosses the membrane as a helical span at residues 674–702; the sequence is KKIHSGAVNQVVAAPILCLFWLLFFSTMR. Topologically, residues 703-707 are extracellular; it reads TGFLA. The chain crosses the membrane as a helical span at residues 708-728; sequence PTSMFTFVVLVITIVICLCHV. Residues C726 and C729 are each lipidated (S-palmitoyl cysteine). Topologically, residues 729–832 are cytoplasmic; that stretch reads CFGHFKYLSA…DSLIENEIHQ (104 aa). The tract at residues 780-814 is disordered; sequence EVDGDGDGAPGSSGDEPPSSSSQDEELLMPPDALT. The segment covering 789-801 has biased composition (low complexity); the sequence is PGSSGDEPPSSSS.

Belongs to the CSC1 (TC 1.A.17) family. Monomer. Interacts with SLC19A2; interaction is required for the phospholipid scramblase activity. Palmitoylation is required for localization to the plasma membrane and stability. In terms of processing, N-Glycosylated.

It is found in the cell membrane. The protein resides in the endoplasmic reticulum membrane. The protein localises to the lysosome membrane. It localises to the early endosome membrane. It carries out the reaction Ca(2+)(in) = Ca(2+)(out). It catalyses the reaction Mg(2+)(in) = Mg(2+)(out). The enzyme catalyses K(+)(in) = K(+)(out). The catalysed reaction is Na(+)(in) = Na(+)(out). It carries out the reaction Cs(+)(in) = Cs(+)(out). It catalyses the reaction a 1,2-diacyl-sn-glycero-3-phosphocholine(in) = a 1,2-diacyl-sn-glycero-3-phosphocholine(out). The enzyme catalyses a sphingomyelin(in) = a sphingomyelin(out). In terms of biological role, mechanosensitive cation channel with low conductance and high activation threshold. Osmosensitive cation channel preferentially activated by hypotonic stress. Also acts as a phospholipid scramblase in response to changes in membrane structure: upon changes in membrane curvature and thickness, alters its conformation and translocates phospholipids, such as phosphatidylcholine and sphingomyelin, thereby controlling plasma membrane lipid distribution. Forms a heterodimer with SLC19A2, which mediates phospholipid scramblase activity following Ca(2+) stimulation. Expressed in excitatory neurons of the subfornical organ and functions as a thirst receptor that mediates neuronal response to hyperosmolality to drive thirst and drinking behavior. Facilitates intestinal motility by promoting proliferation of intestinal stem cells. Essential for the baby's first breath and respiration throughout life. Upon lung inflation conducts cation currents in alveolar type 1 and 2 cells triggering lamellar body exocytosis and surfactant secretion into airspace. Acts as an osmosensor in cochlear outer hair cells (OHCs) where it mediates calcium influx and regulatory volume decrease response. Required for the maintenance of OHC morphology, OHC survival and normal hearing. The protein is Mechanosensitive cation channel TMEM63B of Homo sapiens (Human).